A 284-amino-acid polypeptide reads, in one-letter code: Bifunctional protein FolD (284 aa).

NADP(+) is bound by residues 165-167 (GRS), Ser190, and Ile231.

Belongs to the tetrahydrofolate dehydrogenase/cyclohydrolase family. In terms of assembly, homodimer.

It catalyses the reaction (6R)-5,10-methylene-5,6,7,8-tetrahydrofolate + NADP(+) = (6R)-5,10-methenyltetrahydrofolate + NADPH. The catalysed reaction is (6R)-5,10-methenyltetrahydrofolate + H2O = (6R)-10-formyltetrahydrofolate + H(+). The protein operates within one-carbon metabolism; tetrahydrofolate interconversion. Functionally, catalyzes the oxidation of 5,10-methylenetetrahydrofolate to 5,10-methenyltetrahydrofolate and then the hydrolysis of 5,10-methenyltetrahydrofolate to 10-formyltetrahydrofolate. The chain is Bifunctional protein FolD from Streptococcus thermophilus (strain ATCC BAA-250 / LMG 18311).